The following is a 29-amino-acid chain: SAIACGESCVYIPCFIPGCSCRNRVCYLN.

The cyclopeptide (Ser-Asn) cross-link spans 1–29 (SAIACGESCVYIPCFIPGCSCRNRVCYLN). 3 cysteine pairs are disulfide-bonded: C5–C19, C9–C21, and C14–C26.

In terms of processing, this is a cyclic peptide.

In terms of biological role, probably participates in a plant defense mechanism. The protein is Cycloviolacin-H2 of Viola hederacea (Australian violet).